Here is a 730-residue protein sequence, read N- to C-terminus: Wall-associated receptor kinase-like 1 (730 aa).

The signal sequence occupies residues 1-25 (MKTKTSIFQFIVASVLTLLINDSSA). Residues 26-358 (ATPPPPISNS…KPTKPPVLQG (333 aa)) lie on the Extracellular side of the membrane. Asn-34, Asn-40, Asn-70, Asn-77, Asn-92, Asn-119, Asn-132, Asn-211, Asn-233, Asn-269, and Asn-281 each carry an N-linked (GlcNAc...) asparagine glycan. Positions 282–341 (CSCEYDYFSGMSYRNCYCDYGYTGNPYLRGGCVDTDSCEGNHNCGEDAHCVNMPGPMSMC) are atypical EGF-like. 3 disulfide bridges follow: Cys-284–Cys-297, Cys-319–Cys-331, and Cys-325–Cys-341. Residues 359 to 379 (ILIGLSGLVFFVGLFWLFKLI) form a helical membrane-spanning segment. The Cytoplasmic segment spans residues 380–730 (KKRRNINRSK…DQPMAINNKR (351 aa)). The Protein kinase domain maps to 429 to 702 (FSIDRVLGQG…KEVSNELERI (274 aa)). ATP contacts are provided by residues 435 to 443 (LGQGGQGTV) and Lys-457. At Tyr-502 the chain carries Phosphotyrosine. Residue Asp-554 is the Proton acceptor of the active site. Thr-588 and Thr-593 each carry phosphothreonine. Tyr-601 carries the post-translational modification Phosphotyrosine. The interval 685–730 (KGKNRPNMKEVSNELERIRSSPEDLDVRTENEDEEEDQPMAINNKR) is disordered. Residues 691-714 (NMKEVSNELERIRSSPEDLDVRTE) are compositionally biased toward basic and acidic residues.

It belongs to the protein kinase superfamily. Ser/Thr protein kinase family. As to expression, preferentially expressed in roots and flowers.

The protein resides in the membrane. It carries out the reaction L-seryl-[protein] + ATP = O-phospho-L-seryl-[protein] + ADP + H(+). The catalysed reaction is L-threonyl-[protein] + ATP = O-phospho-L-threonyl-[protein] + ADP + H(+). In terms of biological role, serine/threonine-protein kinase that may function as a signaling receptor of extracellular matrix component. This chain is Wall-associated receptor kinase-like 1 (WAKL1), found in Arabidopsis thaliana (Mouse-ear cress).